The sequence spans 462 residues: Centrosomal protein of 55 kDa (462 aa).

Residues 1 to 11 are compositionally biased toward basic and acidic residues; it reads MSSRSPKDLIK. Residues 1 to 25 form a disordered region; that stretch reads MSSRSPKDLIKSKWGSRPSSSKSDT. The span at 12 to 23 shows a compositional bias: low complexity; sequence SKWGSRPSSSKS. Coiled-coil stretches lie at residues 50–185 and 228–400; these read KVAN…QQWL and YLQE…KQLH. Phosphoserine occurs at positions 96 and 99. Residues 157 to 235 are interaction with TSG101; sequence ANCFNSSMNS…EGYLQEEKQK (79 aa). Positions 160–214 are interaction with PDCD6IP; the sequence is FNSSMNSIHEKEMQLKDALEKNQQWLVYDQQREAYVKGLLAKIFELEKRTETAAA. Positions 354–462 are required for localization to the interphase centrosome and to the midbody during cytokinesis; the sequence is QMQACTLDFE…LLVHVEYCMK (109 aa). Phosphoserine occurs at positions 423 and 426. Thr428 carries the post-translational modification Phosphothreonine. Ser434 carries the phosphoserine; by PLK1 modification.

As to quaternary structure, homodimer. Interacts (phosphorylated on Ser-423 and Ser-426) with PLK1; the interaction is indirect via the MTMR3:MTMR4 heterooligomer, occurs during early mitosis, regulates the phosphorylation of CEP55 by PLK1 and its recruitment to the midbody where it can mediate cell abscission. Interacts with AKAP9/CG-NAP; the interaction occurs in interphase and is lost upon mitotic entry. Interacts with PCNT/Kendrin; the interaction occurs in interphase and is lost upon mitotic entry. Directly interacts with PDCD6IP; this interaction is required for PDCD6IP targeting to the midbody; CEP55 binds PDCD6IP in a 2:1 stoichiometry; PDCD6IP competes with TSG101 for the same binding site. Interacts with TSG101; TSG101 competes with PDCD6IP for the same binding site; interaction is required for cytokinesis. Interacts with MVB12A, VPS37B, VPS37C and VPS28. In terms of processing, there is a hierachy of phosphorylation, where both Ser-423 and Ser-426 are phosphorylated at the onset of mitosis, prior to Ser-434. Phosphorylation at Ser-423 and Ser-426 is required for dissociation from the centrosome at the G2/M boundary. Phosphorylation at the 3 sites, Ser-423, Ser-426 and Ser-434, is required for protein function at the final stages of cell division to complete cytokinesis successfully.

It localises to the cytoplasm. The protein localises to the cytoskeleton. Its subcellular location is the microtubule organizing center. It is found in the centrosome. The protein resides in the centriole. It localises to the cleavage furrow. The protein localises to the midbody. Its subcellular location is the midbody ring. In terms of biological role, plays a role in mitotic exit and cytokinesis. Recruits PDCD6IP and TSG101 to midbody during cytokinesis. Required for successful completion of cytokinesis. Not required for microtubule nucleation. Plays a role in the development of the brain and kidney. The chain is Centrosomal protein of 55 kDa from Rattus norvegicus (Rat).